The primary structure comprises 89 residues: MISSVKLNLILVLSLSTMHVFWCYPVPSSKVSGKSDYFLILLNSCPTRLDRSKELAFLKPILEKMFVKRSFRNGVGTGMKKTSFQRAKS.

An N-terminal signal peptide occupies residues 1–23; sequence MISSVKLNLILVLSLSTMHVFWC. Residues 24–67 constitute a propeptide that is removed on maturation; sequence YPVPSSKVSGKSDYFLILLNSCPTRLDRSKELAFLKPILEKMFV.

It localises to the secreted. In terms of biological role, modulates arousal and anxiety. May play an important anorexigenic role. Binds to its receptor NPSR1 with nanomolar affinity to increase intracellular calcium concentrations. In Homo sapiens (Human), this protein is Neuropeptide S (NPS).